We begin with the raw amino-acid sequence, 233 residues long: Octanoyltransferase (233 aa).

One can recognise a BPL/LPL catalytic domain in the interval 34-214; it reads GQAPSTVLLL…EFSAREATLI (181 aa). Residues 72–79, 144–146, and 157–159 contribute to the substrate site; these read RGGKLTWH, AIG, and GFS. The active-site Acyl-thioester intermediate is Cys175.

Belongs to the LipB family.

It localises to the cytoplasm. It carries out the reaction octanoyl-[ACP] + L-lysyl-[protein] = N(6)-octanoyl-L-lysyl-[protein] + holo-[ACP] + H(+). The protein operates within protein modification; protein lipoylation via endogenous pathway; protein N(6)-(lipoyl)lysine from octanoyl-[acyl-carrier-protein]: step 1/2. Catalyzes the transfer of endogenously produced octanoic acid from octanoyl-acyl-carrier-protein onto the lipoyl domains of lipoate-dependent enzymes. Lipoyl-ACP can also act as a substrate although octanoyl-ACP is likely to be the physiological substrate. The protein is Octanoyltransferase of Renibacterium salmoninarum (strain ATCC 33209 / DSM 20767 / JCM 11484 / NBRC 15589 / NCIMB 2235).